The chain runs to 65 residues: Large ribosomal subunit protein bL35 (65 aa).

The tract at residues 1–22 (MPKLKTKSGAAKRFKKTGKGGF) is disordered.

This sequence belongs to the bacterial ribosomal protein bL35 family.

The chain is Large ribosomal subunit protein bL35 from Francisella philomiragia subsp. philomiragia (strain ATCC 25017 / CCUG 19701 / FSC 153 / O#319-036).